A 229-amino-acid chain; its full sequence is Uracil-DNA glycosylase (229 aa).

Asp-70 serves as the catalytic Proton acceptor.

This sequence belongs to the uracil-DNA glycosylase (UDG) superfamily. UNG family.

It localises to the cytoplasm. It carries out the reaction Hydrolyzes single-stranded DNA or mismatched double-stranded DNA and polynucleotides, releasing free uracil.. Its function is as follows. Excises uracil residues from the DNA which can arise as a result of misincorporation of dUMP residues by DNA polymerase or due to deamination of cytosine. The chain is Uracil-DNA glycosylase from Chlamydia trachomatis serovar L2b (strain UCH-1/proctitis).